The primary structure comprises 109 residues: METKAILKGVRLSDQKGRLVADQIRGKKVDAALNLLQFSPKKGAAIIKRVLESAIANAEHNDGADIDELFVKTIYVEKGPILKRFTARAKGRGDRISKQSCHIYVTVGN.

It belongs to the universal ribosomal protein uL22 family. In terms of assembly, part of the 50S ribosomal subunit.

In terms of biological role, this protein binds specifically to 23S rRNA; its binding is stimulated by other ribosomal proteins, e.g. L4, L17, and L20. It is important during the early stages of 50S assembly. It makes multiple contacts with different domains of the 23S rRNA in the assembled 50S subunit and ribosome. The globular domain of the protein is located near the polypeptide exit tunnel on the outside of the subunit, while an extended beta-hairpin is found that lines the wall of the exit tunnel in the center of the 70S ribosome. This is Large ribosomal subunit protein uL22 from Herminiimonas arsenicoxydans.